The primary structure comprises 188 residues: Ribosome-recycling factor (188 aa).

It belongs to the RRF family.

It localises to the cytoplasm. Its function is as follows. Responsible for the release of ribosomes from messenger RNA at the termination of protein biosynthesis. May increase the efficiency of translation by recycling ribosomes from one round of translation to another. This chain is Ribosome-recycling factor, found in Caulobacter vibrioides (strain NA1000 / CB15N) (Caulobacter crescentus).